Consider the following 429-residue polypeptide: Enolase (429 aa).

Gln-163 contributes to the (2R)-2-phosphoglycerate binding site. Glu-205 (proton donor) is an active-site residue. Residues Asp-242, Glu-286, and Asp-313 each contribute to the Mg(2+) site. Residues Lys-338, Arg-367, Ser-368, and Lys-389 each coordinate (2R)-2-phosphoglycerate. Lys-338 functions as the Proton acceptor in the catalytic mechanism.

This sequence belongs to the enolase family. Requires Mg(2+) as cofactor.

It localises to the cytoplasm. It is found in the secreted. The protein localises to the cell surface. The catalysed reaction is (2R)-2-phosphoglycerate = phosphoenolpyruvate + H2O. It functions in the pathway carbohydrate degradation; glycolysis; pyruvate from D-glyceraldehyde 3-phosphate: step 4/5. In terms of biological role, catalyzes the reversible conversion of 2-phosphoglycerate (2-PG) into phosphoenolpyruvate (PEP). It is essential for the degradation of carbohydrates via glycolysis. This is Enolase from Pelobacter propionicus (strain DSM 2379 / NBRC 103807 / OttBd1).